The chain runs to 225 residues: PKHD-type hydroxylase YbiX (225 aa).

Residues 78–177 form the Fe2OG dioxygenase domain; sequence TLSTPLFNRY…RVASFMWIQS (100 aa). Fe cation is bound by residues H96, D98, and H158. R168 is a 2-oxoglutarate binding site.

It depends on Fe(2+) as a cofactor. L-ascorbate is required as a cofactor.

This is PKHD-type hydroxylase YbiX from Shigella boydii serotype 4 (strain Sb227).